A 416-amino-acid polypeptide reads, in one-letter code: Polyadenylation and cleavage factor homolog 1 (416 aa).

A compositionally biased stretch (polar residues) spans 1–17 (MASNGSFSAQRNANART). Residues 1-80 (MASNGSFSAQ…NNNNVSRVSS (80 aa)) form a disordered region. Low complexity predominate over residues 70–80 (SNNNNVSRVSS). A coiled-coil region spans residues 199–220 (KELTDLLSLLNNEKEKKTLEAS). The segment at 254-276 (RQCSSCGLRFKCQEEHSKHMDWH) adopts a C2H2-type zinc-finger fold.

Forms a complex with cleavage and polyadenylation specificity factor (CPSF) subunits CLPS3, CLPS5, CPSF30, PCFS4, PCFS5, CSTF77 and FIPS3.

The protein resides in the nucleus. The polypeptide is Polyadenylation and cleavage factor homolog 1 (Arabidopsis thaliana (Mouse-ear cress)).